Reading from the N-terminus, the 332-residue chain is tRNA U34 carboxymethyltransferase (332 aa).

Residues Lys91, Trp105, Lys110, Gly130, 152 to 154 (DPS), 181 to 182 (IE), Met196, Tyr200, and Arg315 contribute to the carboxy-S-adenosyl-L-methionine site.

Belongs to the class I-like SAM-binding methyltransferase superfamily. CmoB family. As to quaternary structure, homotetramer.

The enzyme catalyses carboxy-S-adenosyl-L-methionine + 5-hydroxyuridine(34) in tRNA = 5-carboxymethoxyuridine(34) in tRNA + S-adenosyl-L-homocysteine + H(+). Catalyzes carboxymethyl transfer from carboxy-S-adenosyl-L-methionine (Cx-SAM) to 5-hydroxyuridine (ho5U) to form 5-carboxymethoxyuridine (cmo5U) at position 34 in tRNAs. In Shewanella putrefaciens (strain CN-32 / ATCC BAA-453), this protein is tRNA U34 carboxymethyltransferase.